The chain runs to 67 residues: Non-specific lipid-transfer protein 2 (67 aa).

4 disulfides stabilise this stretch: Cys-3/Cys-35, Cys-11/Cys-25, Cys-26/Cys-61, and Cys-37/Cys-67.

It belongs to the plant LTP family. Monomer. Disulfide bonds.

In terms of biological role, plant non-specific lipid-transfer proteins transfer phospholipids as well as galactolipids across membranes. May play a role in wax or cutin deposition in the cell walls of expanding epidermal cells and certain secretory tissues. The sequence is that of Non-specific lipid-transfer protein 2 from Apium graveolens var. rapaceum (Celeriac).